Here is a 126-residue protein sequence, read N- to C-terminus: Probable 4-amino-4-deoxy-L-arabinose-phosphoundecaprenol flippase subunit ArnF (126 aa).

The Cytoplasmic portion of the chain corresponds to 1-4; it reads MKGY. A helical membrane pass occupies residues 5-25; it reads IWGLISVLLVTIAQLLLKWGV. Residues 26 to 49 are Periplasmic-facing; sequence VNLPALNLGLHWFDIEWLWSHRHS. The chain crosses the membrane as a helical span at residues 50–70; the sequence is LVAVMAGLAGYLLSMLCWLFT. Residues 71–79 lie on the Cytoplasmic side of the membrane; sequence LKYLPLNKA. The chain crosses the membrane as a helical span at residues 80-100; sequence YPLISLSYVFVYLMVALLPWF. Residues 101 to 102 are Periplasmic-facing; sequence NE. The helical transmembrane segment at 103-123 threads the bilayer; the sequence is TITLLKTAGVIFILYGVWLIS. The Cytoplasmic segment spans residues 124–126; the sequence is RPE.

This sequence belongs to the ArnF family. In terms of assembly, heterodimer of ArnE and ArnF.

Its subcellular location is the cell inner membrane. It participates in bacterial outer membrane biogenesis; lipopolysaccharide biosynthesis. Its function is as follows. Translocates 4-amino-4-deoxy-L-arabinose-phosphoundecaprenol (alpha-L-Ara4N-phosphoundecaprenol) from the cytoplasmic to the periplasmic side of the inner membrane. This Photorhabdus laumondii subsp. laumondii (strain DSM 15139 / CIP 105565 / TT01) (Photorhabdus luminescens subsp. laumondii) protein is Probable 4-amino-4-deoxy-L-arabinose-phosphoundecaprenol flippase subunit ArnF.